Consider the following 350-residue polypeptide: MSKFWSPFVKNLVPYVPGEQPKLTKLVKLNTNENPYGPSPRALAAMQAELNDNLRLYPDPNSDLLKQAVASYYGVQGNQVFLGNGSDEVLAHIFHGLLQQEKPLLFPDISYSFYPVYCGLYGIEHEAVPLDEQFQIRVADYARPNGGIIFPNPNAPTGCLLALDAVEQILKASPDSVVVVDEAYIDFGGQTAISLVDRYPNLLVTQTLSKSRSLAGLRVGLAVGHPDLIEALERVKNSFNSYPLDRLAIVGAAAAFEDREYFAKTCQQVIDSREWVVAQLQAKGFEVLPSAANFIFARHPRHDAAGLAAKLREQGVIVRHFKQQRIAQFLRISIGTQEQNQALIDGLGEL.

An N6-(pyridoxal phosphate)lysine modification is found at Lys210.

The protein belongs to the class-II pyridoxal-phosphate-dependent aminotransferase family. Histidinol-phosphate aminotransferase subfamily. In terms of assembly, homodimer. The cofactor is pyridoxal 5'-phosphate.

It catalyses the reaction L-histidinol phosphate + 2-oxoglutarate = 3-(imidazol-4-yl)-2-oxopropyl phosphate + L-glutamate. The protein operates within amino-acid biosynthesis; L-histidine biosynthesis; L-histidine from 5-phospho-alpha-D-ribose 1-diphosphate: step 7/9. The sequence is that of Histidinol-phosphate aminotransferase 1 from Pseudomonas fluorescens (strain ATCC BAA-477 / NRRL B-23932 / Pf-5).